Consider the following 276-residue polypeptide: Large ribosomal subunit protein uL2 (276 aa).

Residues 224-276 (VMNPVDHPHGGGEGKAPIGRKSPMTPWGKPTLGYKTRKKKNKSDKFIIRRRKK) form a disordered region. Basic residues predominate over residues 258–276 (KTRKKKNKSDKFIIRRRKK).

It belongs to the universal ribosomal protein uL2 family. In terms of assembly, part of the 50S ribosomal subunit. Forms a bridge to the 30S subunit in the 70S ribosome.

One of the primary rRNA binding proteins. Required for association of the 30S and 50S subunits to form the 70S ribosome, for tRNA binding and peptide bond formation. It has been suggested to have peptidyltransferase activity; this is somewhat controversial. Makes several contacts with the 16S rRNA in the 70S ribosome. This is Large ribosomal subunit protein uL2 from Geobacillus thermodenitrificans (strain NG80-2).